The primary structure comprises 59 residues: Large ribosomal subunit protein uL30 (59 aa).

The protein belongs to the universal ribosomal protein uL30 family. In terms of assembly, part of the 50S ribosomal subunit.

The protein is Large ribosomal subunit protein uL30 of Geotalea uraniireducens (strain Rf4) (Geobacter uraniireducens).